The following is a 260-amino-acid chain: Small ribosomal subunit protein uS2 (260 aa).

Belongs to the universal ribosomal protein uS2 family.

This Staphylococcus carnosus (strain TM300) protein is Small ribosomal subunit protein uS2.